Reading from the N-terminus, the 569-residue chain is AP-4 complex accessory subunit Tepsin (569 aa).

Positions 8–141 constitute an ENTH domain; sequence RDRLSFLHRL…FSDALPQPPS (134 aa). A disordered region spans residues 196-298; the sequence is VRPGPDNPCT…SGASREPGDL (103 aa). The segment covering 219–229 has biased composition (polar residues); it reads VTPSASHTHPN. Over residues 260-292 the composition is skewed to low complexity; it reads SSPSSQNSSCTSNLSRASDSVSRSGSDSHSGAS. Ser400 is subject to Phosphoserine. The tract at residues 467-524 is disordered; it reads VPRSPVPTPSPDTLPPALQDPGELRTQLVCSSEPGTGSEQRLENTDTPKDSSSPCPWS. Positions 470–480 are enriched in pro residues; sequence SPVPTPSPDTL. The span at 494-505 shows a compositional bias: polar residues; the sequence is LVCSSEPGTGSE. Residues 506-515 show a composition bias toward basic and acidic residues; the sequence is QRLENTDTPK. An interaction with AP4B1 region spans residues 525–535; sequence PNSLFAGMELV. The interval 559-569 is interaction with AP4E1; that stretch reads SEPSAFAFLNM.

As to quaternary structure, interacts with AP4B1 and AP4E1; the interaction is direct and mediates the association of TEPSIN with the adapter-like complex 4 (AP-4), a heterotetramer composed of AP4B1, AP4E1, AP4M1 and AP4S1.

The protein localises to the golgi apparatus. It localises to the trans-Golgi network membrane. The protein resides in the cytoplasmic vesicle. It is found in the cytoplasm. Its subcellular location is the cytosol. In terms of biological role, associates with the adapter-like complex 4 (AP-4) and may therefore play a role in vesicular trafficking of proteins at the trans-Golgi network. The polypeptide is AP-4 complex accessory subunit Tepsin (Rattus norvegicus (Rat)).